The following is a 155-amino-acid chain: DNA-directed RNA polymerase 1A (155 aa).

Residue Asp-88 is part of the active site.

Belongs to the phage and mitochondrial RNA polymerase family.

The enzyme catalyses RNA(n) + a ribonucleoside 5'-triphosphate = RNA(n+1) + diphosphate. Functionally, DNA-dependent RNA polymerase catalyzes the transcription of DNA into RNA using the four ribonucleoside triphosphates as substrates. In Nicotiana tabacum (Common tobacco), this protein is DNA-directed RNA polymerase 1A (RPOT1-SYL).